The primary structure comprises 215 residues: uncharacterized protein (215 aa).

This is an uncharacterized protein from Archaeoglobus fulgidus (strain ATCC 49558 / DSM 4304 / JCM 9628 / NBRC 100126 / VC-16).